Consider the following 199-residue polypeptide: Ribosome maturation factor RimP (199 aa).

The interval 165–199 (AGNLPPQPEDDEDMLADFEIDESEDEEDPETGDVQ) is disordered. Over residues 172 to 199 (PEDDEDMLADFEIDESEDEEDPETGDVQ) the composition is skewed to acidic residues.

It belongs to the RimP family.

The protein localises to the cytoplasm. Required for maturation of 30S ribosomal subunits. This chain is Ribosome maturation factor RimP, found in Hyphomonas neptunium (strain ATCC 15444).